The chain runs to 413 residues: Multifunctional CCA protein (413 aa).

Residues Gly8 and Arg11 each coordinate ATP. Positions 8 and 11 each coordinate CTP. Positions 21 and 23 each coordinate Mg(2+). ATP-binding residues include Arg91, Arg137, and Arg140. Arg91, Arg137, and Arg140 together coordinate CTP. The HD domain maps to Thr228–Trp329.

The protein belongs to the tRNA nucleotidyltransferase/poly(A) polymerase family. Bacterial CCA-adding enzyme type 1 subfamily. In terms of assembly, monomer. Can also form homodimers and oligomers. Mg(2+) is required as a cofactor. It depends on Ni(2+) as a cofactor.

It carries out the reaction a tRNA precursor + 2 CTP + ATP = a tRNA with a 3' CCA end + 3 diphosphate. The catalysed reaction is a tRNA with a 3' CCA end + 2 CTP + ATP = a tRNA with a 3' CCACCA end + 3 diphosphate. Catalyzes the addition and repair of the essential 3'-terminal CCA sequence in tRNAs without using a nucleic acid template. Adds these three nucleotides in the order of C, C, and A to the tRNA nucleotide-73, using CTP and ATP as substrates and producing inorganic pyrophosphate. tRNA 3'-terminal CCA addition is required both for tRNA processing and repair. Also involved in tRNA surveillance by mediating tandem CCA addition to generate a CCACCA at the 3' terminus of unstable tRNAs. While stable tRNAs receive only 3'-terminal CCA, unstable tRNAs are marked with CCACCA and rapidly degraded. The polypeptide is Multifunctional CCA protein (Salmonella schwarzengrund (strain CVM19633)).